A 424-amino-acid chain; its full sequence is Glucose-1-phosphate adenylyltransferase (424 aa).

Alpha-D-glucose 1-phosphate is bound by residues Y112, G177, 192-193 (EK), and S210.

This sequence belongs to the bacterial/plant glucose-1-phosphate adenylyltransferase family. In terms of assembly, homotetramer.

The enzyme catalyses alpha-D-glucose 1-phosphate + ATP + H(+) = ADP-alpha-D-glucose + diphosphate. It participates in glycan biosynthesis; glycogen biosynthesis. Functionally, involved in the biosynthesis of ADP-glucose, a building block required for the elongation reactions to produce glycogen. Catalyzes the reaction between ATP and alpha-D-glucose 1-phosphate (G1P) to produce pyrophosphate and ADP-Glc. The chain is Glucose-1-phosphate adenylyltransferase from Methylococcus capsulatus (strain ATCC 33009 / NCIMB 11132 / Bath).